Consider the following 228-residue polypeptide: Ephrin-A5 (228 aa).

The N-terminal stretch at 1-20 (MLHVEMLTLVFLVLWMCVFS) is a signal peptide. Residues 29–162 (ADRYAVYWNS…KLKVFVRPTN (134 aa)) enclose the Ephrin RBD domain. Asparagine 37 carries N-linked (GlcNAc...) asparagine glycosylation. Cystine bridges form between cysteine 62-cysteine 102 and cysteine 90-cysteine 151. The tract at residues 186–205 (EPADDTVHESAEPSRGENAA) is disordered. Residues 190 to 200 (DTVHESAEPSR) show a composition bias toward basic and acidic residues. Asparagine 203 carries GPI-anchor amidated asparagine lipidation. A propeptide spans 204-228 (AAQTPRIPSRLLAILLFLLAMLLTL) (removed in mature form).

This sequence belongs to the ephrin family. Binds to EPHB2. Interacts with EPHA8; activates EPHA8. Binds to the receptor tyrosine kinases EPHA2, EPHA3 and EPHB1. Forms a ternary EFNA5-EPHA3-ADAM10 complex mediating EFNA5 extracellular domain shedding by ADAM10 which regulates the EFNA5-EPHA3 complex internalization and function.

It localises to the cell membrane. The protein localises to the membrane. Its subcellular location is the caveola. In terms of biological role, cell surface GPI-bound ligand for Eph receptors, a family of receptor tyrosine kinases which are crucial for migration, repulsion and adhesion during neuronal, vascular and epithelial development. Binds promiscuously Eph receptors residing on adjacent cells, leading to contact-dependent bidirectional signaling into neighboring cells. The signaling pathway downstream of the receptor is referred to as forward signaling while the signaling pathway downstream of the ephrin ligand is referred to as reverse signaling. Induces compartmentalized signaling within a caveolae-like membrane microdomain when bound to the extracellular domain of its cognate receptor. This signaling event requires the activity of the Fyn tyrosine kinase. Activates the EPHA3 receptor to regulate cell-cell adhesion and cytoskeletal organization. With the receptor EPHA2 may regulate lens fiber cells shape and interactions and be important for lens transparency maintenance. May function actively to stimulate axon fasciculation. The interaction of EFNA5 with EPHA5 also mediates communication between pancreatic islet cells to regulate glucose-stimulated insulin secretion. Cognate/functional ligand for EPHA7, their interaction regulates brain development modulating cell-cell adhesion and repulsion. In Homo sapiens (Human), this protein is Ephrin-A5 (EFNA5).